Consider the following 65-residue polypeptide: MPKLKTKSGAAKRFKKTGKGGFKHRCANRAHINTKMTTKRKRHLRGMNQVAKVDTASLVQQMPYA.

A disordered region spans residues 1 to 22 (MPKLKTKSGAAKRFKKTGKGGF).

It belongs to the bacterial ribosomal protein bL35 family.

The sequence is that of Large ribosomal subunit protein bL35 from Francisella philomiragia subsp. philomiragia (strain ATCC 25017 / CCUG 19701 / FSC 153 / O#319-036).